A 636-amino-acid chain; its full sequence is Nucleolin 2 (636 aa).

Disordered stretches follow at residues 1–386, 458–481, and 544–636; these read MGKS…SKTL, ANERGTPRNSNPGRKGEGSQSRTI, and SEIG…NDEE. 2 stretches are compositionally biased toward basic and acidic residues: residues 43-63 and 76-89; these read KELIDVVQKEKAEKTVPKKVE and EKTKETPSKLKDES. Residues 90–103 show a composition bias toward acidic residues; the sequence is SSEEEDDSSSDEEI. A compositionally biased stretch (basic and acidic residues) spans 104-118; that stretch reads APAKKRPEPIKKAKV. Acidic residues-rich tracts occupy residues 122–133, 152–163, and 182–193; these read SSDDDSTSDEET and SSDDDSSSDEET. Residues 224-238 are compositionally biased toward basic and acidic residues; sequence TPAKKEPIVVKKDSS. Composition is skewed to acidic residues over residues 267–278, 299–311, and 331–341; these read SSEEESSSDDEP, SSEEDSDEEESDD, and SSDESSDESDK. Positions 342–367 are enriched in basic and acidic residues; that stretch reads EESKDEKVTPKKKDSDVEMVDAEQKS. The span at 368–383 shows a compositional bias: polar residues; that stretch reads NAKQPKTPTNQTQGGS. 2 consecutive RRM domains span residues 384–460 and 479–558; these read KTLF…LANE and RTIY…ESRP. Residues 464–481 show a composition bias toward polar residues; that stretch reads PRNSNPGRKGEGSQSRTI. Composition is skewed to basic and acidic residues over residues 552–566 and 579–604; these read HVEESRPRDSDEGRS and RHSDRAPRGGRFSDRAPRGRHSDRGA. The span at 622 to 636 shows a compositional bias: polar residues; sequence MESSKGTKTVFNDEE.

As to quaternary structure, interacts with THAL in the nucleus. Expressed at low levels in flower buds.

The protein localises to the nucleus. It is found in the nucleolus. Its function is as follows. Involved in pre-rRNA processing and ribosome assembly. This chain is Nucleolin 2, found in Arabidopsis thaliana (Mouse-ear cress).